The primary structure comprises 250 residues: Flagellar L-ring protein (250 aa).

An N-terminal signal peptide occupies residues 1-32; sequence MTRINTNTQKNNNTKFSKLILGVMVSSIVLSG. C33 carries N-palmitoyl cysteine lipidation. A lipid anchor (S-diacylglycerol cysteine) is attached at C33.

Belongs to the FlgH family. In terms of assembly, the basal body constitutes a major portion of the flagellar organelle and consists of four rings (L,P,S, and M) mounted on a central rod.

Its subcellular location is the cell outer membrane. It localises to the bacterial flagellum basal body. Functionally, assembles around the rod to form the L-ring and probably protects the motor/basal body from shearing forces during rotation. The sequence is that of Flagellar L-ring protein from Hydrogenovibrio crunogenus (strain DSM 25203 / XCL-2) (Thiomicrospira crunogena).